Consider the following 238-residue polypeptide: Uridylate kinase (238 aa).

12 to 15 (KLSG) contributes to the ATP binding site. G54 is a binding site for UMP. Positions 55 and 59 each coordinate ATP. UMP is bound by residues D74 and 135-142 (TGNPYFTT). ATP is bound by residues T162, Y168, and D171.

Belongs to the UMP kinase family. In terms of assembly, homohexamer.

The protein resides in the cytoplasm. The enzyme catalyses UMP + ATP = UDP + ADP. Its pathway is pyrimidine metabolism; CTP biosynthesis via de novo pathway; UDP from UMP (UMPK route): step 1/1. Its activity is regulated as follows. Inhibited by UTP. Its function is as follows. Catalyzes the reversible phosphorylation of UMP to UDP. The protein is Uridylate kinase of Oleidesulfovibrio alaskensis (strain ATCC BAA-1058 / DSM 17464 / G20) (Desulfovibrio alaskensis).